The primary structure comprises 237 residues: 7-cyano-7-deazaguanine synthase (237 aa).

15-25 (LSGGMDSTVCA) is a binding site for ATP. Cys-197, Cys-205, Cys-208, and Cys-211 together coordinate Zn(2+).

The protein belongs to the QueC family. Zn(2+) serves as cofactor.

It carries out the reaction 7-carboxy-7-deazaguanine + NH4(+) + ATP = 7-cyano-7-deazaguanine + ADP + phosphate + H2O + H(+). It functions in the pathway purine metabolism; 7-cyano-7-deazaguanine biosynthesis. Functionally, catalyzes the ATP-dependent conversion of 7-carboxy-7-deazaguanine (CDG) to 7-cyano-7-deazaguanine (preQ(0)). The sequence is that of 7-cyano-7-deazaguanine synthase from Koribacter versatilis (strain Ellin345).